A 338-amino-acid polypeptide reads, in one-letter code: Lipoate-protein ligase A (338 aa).

The 188-residue stretch at 29–216 (PATQRVLFLW…AFFAHYGERV (188 aa)) folds into the BPL/LPL catalytic domain. ATP is bound by residues arginine 71, 76-79 (GAVF), and lysine 134. Lysine 134 serves as a coordination point for (R)-lipoate.

It belongs to the LplA family. Monomer.

It is found in the cytoplasm. It carries out the reaction L-lysyl-[lipoyl-carrier protein] + (R)-lipoate + ATP = N(6)-[(R)-lipoyl]-L-lysyl-[lipoyl-carrier protein] + AMP + diphosphate + H(+). It participates in protein modification; protein lipoylation via exogenous pathway; protein N(6)-(lipoyl)lysine from lipoate: step 1/2. The protein operates within protein modification; protein lipoylation via exogenous pathway; protein N(6)-(lipoyl)lysine from lipoate: step 2/2. In terms of biological role, catalyzes both the ATP-dependent activation of exogenously supplied lipoate to lipoyl-AMP and the transfer of the activated lipoyl onto the lipoyl domains of lipoate-dependent enzymes. This Escherichia coli (strain SMS-3-5 / SECEC) protein is Lipoate-protein ligase A.